A 178-amino-acid polypeptide reads, in one-letter code: uncharacterized protein (178 aa).

The protein belongs to the IIV-6 136R family.

This is an uncharacterized protein from Invertebrate iridescent virus 6 (IIV-6).